The following is a 346-amino-acid chain: Homeobox protein ceh-22 (346 aa).

Disordered regions lie at residues 1–68 (MFNV…QSAL) and 135–190 (LPDQ…RKKR). Over residues 9 to 24 (AATPSIASVSSVASPS) the composition is skewed to low complexity. A compositionally biased stretch (polar residues) spans 25–44 (EQHGLSTSVGVGVNDTTSRT). Over residues 49-67 (AASSASSASAAPQQQSQSA) the composition is skewed to low complexity. Over residues 147-156 (LDNSNTSNGN) the composition is skewed to polar residues. Residues 166 to 182 (EDEDEILEDEENDEEDD) show a composition bias toward acidic residues. The homeobox DNA-binding region spans 189-248 (KRKRRVLFTKAQTYELERRFRSQKYLSAPEREALAMQIRLTPTQVKIWFQNHRYKTKKSH).

This sequence belongs to the NK-2 homeobox family.

The protein localises to the nucleus. Its function is as follows. Involved in combinatorial activation of gene expression in pharyngeal muscle. Specifically binds a site necessary for activity of the B subelement of myo-2 enhancer. In terms of biological role, regulates distal tip cell fate. In Caenorhabditis elegans, this protein is Homeobox protein ceh-22 (ceh-22).